The following is an 88-amino-acid chain: MIATEQKKQIISNFARKAGDTGSTEVQIALIDARIKELNEHFKTHKKDFHSKTGLLRLVGKRKKLLDYLKRTELERYKKLIETLGLRK.

The protein belongs to the universal ribosomal protein uS15 family. In terms of assembly, part of the 30S ribosomal subunit. Forms a bridge to the 50S subunit in the 70S ribosome, contacting the 23S rRNA.

One of the primary rRNA binding proteins, it binds directly to 16S rRNA where it helps nucleate assembly of the platform of the 30S subunit by binding and bridging several RNA helices of the 16S rRNA. In terms of biological role, forms an intersubunit bridge (bridge B4) with the 23S rRNA of the 50S subunit in the ribosome. The sequence is that of Small ribosomal subunit protein uS15 from Leptospira interrogans serogroup Icterohaemorrhagiae serovar copenhageni (strain Fiocruz L1-130).